Here is a 301-residue protein sequence, read N- to C-terminus: Heme A synthase (301 aa).

Topologically, residues 1-5 are cytoplasmic; that stretch reads MHKKL. Residues 6 to 26 form a helical membrane-spanning segment; that stretch reads AFFSGFVTLGMMLVLIMGGTV. Residues 27–62 lie on the Extracellular side of the membrane; that stretch reads TKTDSGDGCGTDWPLCHGKLIPTNPSVETMIEYSHR. The cysteines at positions 35 and 42 are disulfide-linked. The active site involves glutamate 58. Heme o is bound at residue histidine 61. Residues 63 to 83 form a helical membrane-spanning segment; that stretch reads VVSGIEGLLIIALAIWTFIAV. Over 84-90 the chain is Cytoplasmic; that stretch reads KHRVDVK. The helical transmembrane segment at 91 to 111 threads the bilayer; that stretch reads IFAFLAFIFMLIQSIIGAGAV. The Extracellular segment spans residues 112 to 121; the sequence is IWQQSDAILA. The chain crosses the membrane as a helical span at residues 122–142; sequence LHFGISLVSFASLLILTILLF. Residue histidine 123 coordinates heme o. Residues 143-158 lie on the Cytoplasmic side of the membrane; that stretch reads EGDREHQVVSRRLRSH. A helical transmembrane segment spans residues 159-179; sequence LYGLSIYTMIVVYTGAYVRHL. Residues 180-203 are Extracellular-facing; it reads GATYACVGWPICEQEVWTFESYVQ. A disulfide bridge connects residues cysteine 185 and cysteine 191. The chain crosses the membrane as a helical span at residues 204–224; the sequence is MGHRVMAGLLVLYTLYVLYLA. Residue histidine 206 participates in heme b binding. Residues 225–234 lie on the Cytoplasmic side of the membrane; the sequence is RKEMNRLIER. Residues 235–255 form a helical membrane-spanning segment; it reads GMMASLFFILLQVGTGAWIVL. Over 256-259 the chain is Extracellular; that stretch reads GGHA. Residues 260-280 form a helical membrane-spanning segment; it reads TYVPLLHAFLITCYFGILSYL. Histidine 266 contributes to the heme b binding site. The Cytoplasmic portion of the chain corresponds to 281-301; sequence SYHAYRSTARQDGAQLKNMNG.

Belongs to the COX15/CtaA family. Type 1 subfamily. In terms of assembly, interacts with CtaB. Requires heme b as cofactor.

The protein resides in the cell membrane. It catalyses the reaction Fe(II)-heme o + 2 A + H2O = Fe(II)-heme a + 2 AH2. The protein operates within porphyrin-containing compound metabolism; heme A biosynthesis; heme A from heme O: step 1/1. Catalyzes the conversion of heme O to heme A by two successive hydroxylations of the methyl group at C8. The first hydroxylation forms heme I, the second hydroxylation results in an unstable dihydroxymethyl group, which spontaneously dehydrates, resulting in the formyl group of heme A. In Exiguobacterium sp. (strain ATCC BAA-1283 / AT1b), this protein is Heme A synthase.